A 391-amino-acid chain; its full sequence is MTNNTKTITLNLGPQHPATHGVLRLILEMDGEVVNNADPHIGLLHRGTEKLIEHKTYLQAIPYFDRLDYVSPMCQEHAFALAVESLLECKVPRRAQFIRVLFSELTRILNHTLNIGSQALDIGATTPLLWLFEEREKIMEFYEHVSGSRMHSNYFRPGGVVADLPEGLLEDIDKFIEQFPPKLHDIESLLNENRLWKQRLVDIGVVSQKEAMDWGFSGPMLRGSGIAWDLRKSNPYDVYDEMDFKVPIGKNGDCYDRYFVRMLEMYESIKIIKQCIEKMPKGAIKTDDPKLTPPTRAKMKESMEAMIHHFKLYTEGYDVPAGETYKAVEAPKGEFGVYLYSRGGNRPYRCRIKAPGFAHLQGLDFMSQGHLMADVITIIATLDIVFGEIDR.

This sequence belongs to the complex I 49 kDa subunit family. As to quaternary structure, NDH-1 is composed of 14 different subunits. Subunits NuoB, C, D, E, F, and G constitute the peripheral sector of the complex.

It is found in the cell inner membrane. It carries out the reaction a quinone + NADH + 5 H(+)(in) = a quinol + NAD(+) + 4 H(+)(out). In terms of biological role, NDH-1 shuttles electrons from NADH, via FMN and iron-sulfur (Fe-S) centers, to quinones in the respiratory chain. The immediate electron acceptor for the enzyme in this species is believed to be ubiquinone. Couples the redox reaction to proton translocation (for every two electrons transferred, four hydrogen ions are translocated across the cytoplasmic membrane), and thus conserves the redox energy in a proton gradient. The chain is NADH-quinone oxidoreductase subunit D from Rickettsia rickettsii (strain Sheila Smith).